We begin with the raw amino-acid sequence, 280 residues long: Phosphatidylglycerol--prolipoprotein diacylglyceryl transferase (280 aa).

Helical transmembrane passes span 23–43, 58–78, 93–113, and 120–140; these read LRWY…LAGV, LLFW…VLFY, IWTG…ALWW, and CTFL…LGAG. R141 is an a 1,2-diacyl-sn-glycero-3-phospho-(1'-sn-glycerol) binding site. A run of 3 helical transmembrane segments spans residues 173–193, 200–220, and 241–261; these read PSQL…LWLY, IGAV…FVEF, and QGQI…VWAV.

This sequence belongs to the Lgt family.

Its subcellular location is the cell inner membrane. The catalysed reaction is L-cysteinyl-[prolipoprotein] + a 1,2-diacyl-sn-glycero-3-phospho-(1'-sn-glycerol) = an S-1,2-diacyl-sn-glyceryl-L-cysteinyl-[prolipoprotein] + sn-glycerol 1-phosphate + H(+). The protein operates within protein modification; lipoprotein biosynthesis (diacylglyceryl transfer). In terms of biological role, catalyzes the transfer of the diacylglyceryl group from phosphatidylglycerol to the sulfhydryl group of the N-terminal cysteine of a prolipoprotein, the first step in the formation of mature lipoproteins. The polypeptide is Phosphatidylglycerol--prolipoprotein diacylglyceryl transferase (Pseudoalteromonas atlantica (strain T6c / ATCC BAA-1087)).